We begin with the raw amino-acid sequence, 438 residues long: Tol-Pal system protein TolB (438 aa).

The N-terminal stretch at 1–35 (MITMKNILKLRATGLLLLLLLMISVLGNGIGQAMA) is a signal peptide.

It belongs to the TolB family. The Tol-Pal system is composed of five core proteins: the inner membrane proteins TolA, TolQ and TolR, the periplasmic protein TolB and the outer membrane protein Pal. They form a network linking the inner and outer membranes and the peptidoglycan layer.

The protein localises to the periplasm. Its function is as follows. Part of the Tol-Pal system, which plays a role in outer membrane invagination during cell division and is important for maintaining outer membrane integrity. This chain is Tol-Pal system protein TolB, found in Desulfotalea psychrophila (strain LSv54 / DSM 12343).